The sequence spans 152 residues: Toxin Res (152 aa).

Belongs to the MbcT/ParT/Res family. In terms of assembly, homodimer. Forms a complex with cognate antitoxin Xre.

Toxic component of a type II toxin-antitoxin (TA) system. Expression in E.coli inhibits cell growth; bacteriostasis is neutralized by expression of cognate antitoxin Xre. Probably depletes intracellular NAD(+). This chain is Toxin Res, found in Yersinia enterocolitica serotype O:8 / biotype 1B (strain NCTC 13174 / 8081).